Here is a 284-residue protein sequence, read N- to C-terminus: 4-diphosphocytidyl-2-C-methyl-D-erythritol kinase (284 aa).

Residue lysine 14 is part of the active site. Residue 98-108 (PMGGGLGGGSS) coordinates ATP. The active site involves aspartate 140.

It belongs to the GHMP kinase family. IspE subfamily.

The catalysed reaction is 4-CDP-2-C-methyl-D-erythritol + ATP = 4-CDP-2-C-methyl-D-erythritol 2-phosphate + ADP + H(+). It participates in isoprenoid biosynthesis; isopentenyl diphosphate biosynthesis via DXP pathway; isopentenyl diphosphate from 1-deoxy-D-xylulose 5-phosphate: step 3/6. Its function is as follows. Catalyzes the phosphorylation of the position 2 hydroxy group of 4-diphosphocytidyl-2C-methyl-D-erythritol. This chain is 4-diphosphocytidyl-2-C-methyl-D-erythritol kinase, found in Shewanella sp. (strain W3-18-1).